We begin with the raw amino-acid sequence, 614 residues long: Pyruvate decarboxylase 2 (614 aa).

The substrate site is built by Asp50 and His137. The interval 415–523 (DSWFNCQKLK…FLINNGGYTI (109 aa)) is thiamine pyrophosphate binding. Positions 491, 518, and 520 each coordinate Mg(2+). Position 524 (Glu524) interacts with substrate.

This sequence belongs to the TPP enzyme family. As to quaternary structure, homotetramer. It depends on a metal cation as a cofactor. Requires thiamine diphosphate as cofactor. In terms of tissue distribution, pollen.

The enzyme catalyses a 2-oxocarboxylate + H(+) = an aldehyde + CO2. The chain is Pyruvate decarboxylase 2 (PDC2) from Nicotiana tabacum (Common tobacco).